A 294-amino-acid polypeptide reads, in one-letter code: Bidirectional sugar transporter SWEET13 (294 aa).

Topologically, residues 1 to 7 (MALTNNL) are extracellular. Residues 8–28 (WAFVFGILGNIISFVVFLAPV) traverse the membrane as a helical segment. The region spanning 10-97 (FVFGILGNII…VLFVSYANKK (88 aa)) is the MtN3/slv 1 domain. Residues 29–42 (PTFVRICKKKSTEG) are Cytoplasmic-facing. A helical transmembrane segment spans residues 43–63 (FQSLPYVSALFSAMLWIYYAM). At 64–69 (QKDGTA) the chain is on the extracellular side. A helical membrane pass occupies residues 70 to 90 (FLLITINAFGCVIETIYIVLF). The Cytoplasmic segment spans residues 91–104 (VSYANKKTRISTLK). Residues 105 to 125 (VLGLLNFLGFAAIVLVCELLT) traverse the membrane as a helical segment. Topologically, residues 126–132 (KGSTREK) are extracellular. Residues 133-153 (VLGGICVGFSVSVFAAPLSIM) traverse the membrane as a helical segment. One can recognise a MtN3/slv 2 domain in the interval 133-216 (VLGGICVGFS…MILYIIFKYY (84 aa)). At 154–166 (RVVVRTRSVEFMP) the chain is on the cytoplasmic side. A helical membrane pass occupies residues 167 to 187 (FSLSLFLTISAVTWLFYGLAI). The Extracellular portion of the chain corresponds to 188 to 192 (KDFYV). The chain crosses the membrane as a helical span at residues 193–213 (ALPNVLGAFLGAVQMILYIIF). Topologically, residues 214–294 (KYYKTPVAQK…NKDVQKQSQV (81 aa)) are cytoplasmic. The segment at 273 to 294 (KSQNMTDPKDQINKDVQKQSQV) is disordered. The segment covering 279–294 (DPKDQINKDVQKQSQV) has biased composition (basic and acidic residues).

The protein belongs to the SWEET sugar transporter family. Forms heterooligomers with SWEET1, SWEET3, SWEET6, SWEET7, SWEET8, SWEET9, SWEET11 and SWEET17. Expressed at low levels in leaves.

It localises to the cell membrane. In terms of biological role, mediates both low-affinity uptake and efflux of sugar across the plasma membrane. Involved in nurturing the male gametophyte. The sequence is that of Bidirectional sugar transporter SWEET13 from Arabidopsis thaliana (Mouse-ear cress).